Consider the following 315-residue polypeptide: Glycine--tRNA ligase alpha subunit (315 aa).

The protein belongs to the class-II aminoacyl-tRNA synthetase family. Tetramer of two alpha and two beta subunits.

Its subcellular location is the cytoplasm. It catalyses the reaction tRNA(Gly) + glycine + ATP = glycyl-tRNA(Gly) + AMP + diphosphate. The protein is Glycine--tRNA ligase alpha subunit of Pseudomonas entomophila (strain L48).